The chain runs to 164 residues: Large ribosomal subunit protein uL10 (164 aa).

It belongs to the universal ribosomal protein uL10 family. Part of the ribosomal stalk of the 50S ribosomal subunit. The N-terminus interacts with L11 and the large rRNA to form the base of the stalk. The C-terminus forms an elongated spine to which L12 dimers bind in a sequential fashion forming a multimeric L10(L12)X complex.

Forms part of the ribosomal stalk, playing a central role in the interaction of the ribosome with GTP-bound translation factors. This Chromobacterium violaceum (strain ATCC 12472 / DSM 30191 / JCM 1249 / CCUG 213 / NBRC 12614 / NCIMB 9131 / NCTC 9757 / MK) protein is Large ribosomal subunit protein uL10.